The primary structure comprises 103 residues: N(4)-acetylcytidine amidohydrolase (103 aa).

One can recognise an ASCH domain in the interval 6–92; that stretch reads TFFERFEQDI…VIQEIYPGLE (87 aa). Residue Lys-20 is the Proton acceptor of the active site. The active-site Nucleophile is Thr-23. Glu-73 acts as the Proton donor in catalysis.

The protein belongs to the N(4)-acetylcytidine amidohydrolase family.

It catalyses the reaction N(4)-acetylcytidine + H2O = cytidine + acetate + H(+). The enzyme catalyses N(4)-acetyl-2'-deoxycytidine + H2O = 2'-deoxycytidine + acetate + H(+). The catalysed reaction is N(4)-acetylcytosine + H2O = cytosine + acetate + H(+). In terms of biological role, catalyzes the hydrolysis of N(4)-acetylcytidine (ac4C). This chain is N(4)-acetylcytidine amidohydrolase, found in Shewanella sp. (strain MR-4).